Consider the following 183-residue polypeptide: Ubiquitin-conjugating enzyme E2 6 (183 aa).

In terms of domain architecture, UBC core spans 1–148 (MASPSKRREM…VKEYCEKYAK (148 aa)). Catalysis depends on cysteine 85, which acts as the Glycyl thioester intermediate. A disordered region spans residues 148-183 (KPEEILSDDDDDDSMSEDGSDSDDDDDDEIVGKADP). Positions 152–176 (ILSDDDDDDSMSEDGSDSDDDDDDE) are enriched in acidic residues.

It belongs to the ubiquitin-conjugating enzyme family. In terms of tissue distribution, expressed in roots, petals, sepals and silique walls.

The catalysed reaction is S-ubiquitinyl-[E1 ubiquitin-activating enzyme]-L-cysteine + [E2 ubiquitin-conjugating enzyme]-L-cysteine = [E1 ubiquitin-activating enzyme]-L-cysteine + S-ubiquitinyl-[E2 ubiquitin-conjugating enzyme]-L-cysteine.. It participates in protein modification; protein ubiquitination. Accepts the ubiquitin from the E1 complex and catalyzes its covalent attachment to other proteins. This Arabidopsis thaliana (Mouse-ear cress) protein is Ubiquitin-conjugating enzyme E2 6 (UBC6).